Here is a 208-residue protein sequence, read N- to C-terminus: Small ribosomal subunit protein eS8 (208 aa).

The segment at 1 to 33 (MGISRDHWHKRRATGGKRKPIRKKRKFELGRPA) is disordered. Residues 7-26 (HWHKRRATGGKRKPIRKKRK) are compositionally biased toward basic residues.

The protein belongs to the eukaryotic ribosomal protein eS8 family.

The sequence is that of Small ribosomal subunit protein eS8 (RpS8) from Apis mellifera (Honeybee).